The following is a 398-amino-acid chain: MASESDASSIATLSCARCEKPAHLQCPKCIDLKLPREQASFCTQECFKAAWSSHKSVHVKAQLSSIGDQNSDLISQGWLYCVKKGQARTPKLPHFDWTGPLKQYPISTKRVVPAEIEKPDWAIDGTPKVEPNSDLQHVVEIKTPEQIQRMRETCKIAREVLDAAARVIHPGVTTDEIDRVVHEATIAAGGYPSPLNYYFFPKSCCTSVNEVICHGIPDARKLEDGDIVNVDVTVCYKGCHGDLNETYFVGNVDEASRQLVKCTYECLEKAIAIVKPGVRFREIGEIVNRHATMSGLSVVRSYCGHGIGDLFHCAPNIPHYARNKAVGVMKAGQTFTIEPMINAGGWRDRTWPDGWTAVTADGKRSAQFEHTLLVTETGVEVLTARLPSSPDVYPWLTK.

Ala2 bears the N-acetylalanine mark. The C6H2-type zinc-finger motif lies at 12 to 65 (TLSCARCEKPAHLQCPKCIDLKLPREQASFCTQECFKAAWSSHKSVHVKAQLSS). Zn(2+)-binding residues include Cys15, Cys18, Cys26, Cys29, Cys42, Cys46, His54, and His58. His214 lines the a protein pocket. 3 residues coordinate Zn(2+): Asp231, Asp242, and His305. His312 is a binding site for a protein. Zn(2+) contacts are provided by Glu338 and Glu369.

This sequence belongs to the peptidase M24A family. Methionine aminopeptidase type 1 subfamily. As to quaternary structure, associates with the 60S ribosomal subunit of the 80S translational complex. The cofactor is Zn(2+). Co(2+) is required as a cofactor. It depends on Mn(2+) as a cofactor. Requires Fe(2+) as cofactor. As to expression, ubiquitous.

It localises to the cytoplasm. It catalyses the reaction Release of N-terminal amino acids, preferentially methionine, from peptides and arylamides.. In terms of biological role, cotranslationally removes the N-terminal methionine from nascent proteins. The N-terminal methionine is often cleaved when the second residue in the primary sequence is small and uncharged (Met-Ala-, Cys, Gly, Pro, Ser, Thr, or Val). This is Methionine aminopeptidase 1A (MAP1A) from Arabidopsis thaliana (Mouse-ear cress).